We begin with the raw amino-acid sequence, 367 residues long: MVMEVGTLDAGGLRALLGERAAQCLLLDCRSFFAFNAGHIAGSVNVRFSTIVRRRAKGAMGLEHIVPNAELRGRLLAGAYHAVVLLDERSAALDGAKRDGTLALAAGALCREARAAQVFFLKGGYEAFSASCPELCSKQSTPMGLSLPLSTSVPDSAESGCSSCSTPLYDQGGPVEILPFLYLGSAYHASRKDMLDALGITALINVSANCPNHFEGHYQYKSIPVEDNHKADISSWFNEAIDFIDSIKNAGGRVFVHCQAGISRSATICLAYLMRTNRVKLDEAFEFVKQRRSIISPNFSFMGQLLQFESQVLAPHCSAEAGSPAMAVLDRGTSTTTVFNFPVSIPVHSTNSALSYLQSPITTSPSC.

Residues 20–137 (RAAQCLLLDC…FSASCPELCS (118 aa)) form the Rhodanese domain. The 142-residue stretch at 173 to 314 (GPVEILPFLY…LLQFESQVLA (142 aa)) folds into the Tyrosine-protein phosphatase domain. The active-site Phosphocysteine intermediate is the Cys-258. Phosphoserine; by MAPK1 and MAPK3 is present on residues Ser-359 and Ser-364.

It belongs to the protein-tyrosine phosphatase family. Non-receptor class dual specificity subfamily. Post-translationally, phosphorylation at Ser-359 and Ser-364 by MAPK1/ERK2 and MAPK3/ERK1 reduces its rate of degradation. 'Lys-48'-linked polyubiquitinated by NEURL3, leading to proteasomal degradation. In terms of tissue distribution, expressed at high levels in the lung, liver placenta and pancreas. Moderate levels seen in the heart and skeletal muscle. Lower levels found in the brain and kidney.

The protein localises to the nucleus. It catalyses the reaction O-phospho-L-tyrosyl-[protein] + H2O = L-tyrosyl-[protein] + phosphate. The enzyme catalyses O-phospho-L-seryl-[protein] + H2O = L-seryl-[protein] + phosphate. The catalysed reaction is O-phospho-L-threonyl-[protein] + H2O = L-threonyl-[protein] + phosphate. Its function is as follows. Dual specificity phosphatase that dephosphorylates MAP kinase MAPK1/ERK2 on both 'Thr-183' and 'Tyr-185', regulating its activity during the meiotic cell cycle. The protein is Dual specificity protein phosphatase 1 of Homo sapiens (Human).